The chain runs to 268 residues: uncharacterized protein (268 aa).

This is an uncharacterized protein from Acanthamoeba polyphaga mimivirus (APMV).